Here is a 93-residue protein sequence, read N- to C-terminus: Protein 6 (93 aa).

The segment covering 1–16 (MSSQQETNDKSNTQGH) has biased composition (polar residues). The tract at residues 1–52 (MSSQQETNDKSNTQGHPETDPEGKTGTDTGNTEDSPPDTDNVPITDDAIMDD) is disordered.

Its subcellular location is the virion. This is Protein 6 (6) from Rice yellow stunt virus (RYSV).